Here is a 398-residue protein sequence, read N- to C-terminus: Ureide permease 2 (398 aa).

At 1-10 (MYLVESKGGA) the chain is on the extracellular side. Residues 11 to 31 (IACMLLALLSLGTWPAVLTLL) traverse the membrane as a helical segment. Residues 32 to 44 (ERRGRLPQHTYLD) are Cytoplasmic-facing. A helical transmembrane segment spans residues 45 to 65 (YSITNLLAAIIIAFTFGQIGS). Topologically, residues 66–81 (TKPDSPNFITQLAQDN) are extracellular. Residues 82–102 (WPSVMFAMAGGIVLSLGNLST) traverse the membrane as a helical segment. Residues 103–104 (QY) are Cytoplasmic-facing. The chain crosses the membrane as a helical span at residues 105-125 (AWALVGLSVTEVITSSITVVI). At 126 to 139 (GSTLNYFLDDKINK) the chain is on the extracellular side. Residues 140–160 (AEILFPGVACFLIAVCLGSAV) form a helical membrane-spanning segment. The Cytoplasmic segment spans residues 161–229 (HRSNADDNKA…RAIKVFGKRK (69 aa)). Positions 176–200 (ETAKQEASGPSTEIGTNSSKDLETN) are disordered. The segment covering 183-200 (SGPSTEIGTNSSKDLETN) has biased composition (polar residues). Residue 221–228 (AIKVFGKR) participates in ATP binding. Residues 230 to 250 (IIGLAITFFAGLCFSLFSPAF) form a helical membrane-spanning segment. The Extracellular segment spans residues 251 to 272 (NLATNDQWNRLKQGVPKLVVYT). A helical transmembrane segment spans residues 273–293 (AFFYFSVSCFIIALILNVVFL). The Cytoplasmic segment spans residues 294–315 (YYPVLGLPKSSFKAYLNDWNGR). The chain crosses the membrane as a helical span at residues 316–336 (YWAFLAGFLCGFGNGLQFMGG). Topologically, residues 337–341 (QAAGY) are extracellular. A helical membrane pass occupies residues 342 to 362 (AAADSVQALPLVSTFWGVVLF). Topologically, residues 363-371 (GEYRRSSRK) are cytoplasmic. A helical transmembrane segment spans residues 372–392 (TYLLLFCMLFMFISAVAVLMA). Topologically, residues 393-398 (SSGHRK) are extracellular.

The protein belongs to the plant ureide permease (TC 2.A.7.19) family. As to expression, expressed in root xylem, cotyledons and leaves. Expressed in leaf blades, petioles, trichomes, stems, flower stigma, the upper part of pedicels, sepals, and the top and bottom parts of carpels in siliques.

It is found in the membrane. In terms of biological role, proton-coupled transporter that transports a wide spectrum of oxo derivatives of heterocyclic nitrogen compounds, including allantoin, uric acid and xanthine, but not adenine. Mediates high affinity transport of uracil and 5-fluorouracil (a toxic uracil analog). Mediates transport of free pyrimidines and may function during early seedling development in salvage pathways, by the utilization of pyrimidines from seed storage tissue. This Arabidopsis thaliana (Mouse-ear cress) protein is Ureide permease 2.